The sequence spans 144 residues: Large ribosomal subunit protein uL14 (144 aa).

This sequence belongs to the universal ribosomal protein uL14 family. In terms of assembly, part of the 50S ribosomal subunit. Forms a cluster with proteins L3 and L24e, part of which may contact the 16S rRNA in 2 intersubunit bridges.

Its function is as follows. Binds to 23S rRNA. Forms part of two intersubunit bridges in the 70S ribosome. In Pyrobaculum arsenaticum (strain DSM 13514 / JCM 11321 / PZ6), this protein is Large ribosomal subunit protein uL14.